The chain runs to 283 residues: Polyamine aminopropyltransferase (283 aa).

Residues 2–238 (ELWYTEEWTE…GHWLFGFASK (237 aa)) enclose the PABS domain. An S-methyl-5'-thioadenosine-binding site is contributed by glutamine 31. Spermidine-binding residues include histidine 62 and aspartate 86. Residues glutamate 106 and 137 to 138 (DG) contribute to the S-methyl-5'-thioadenosine site. Residue aspartate 156 is the Proton acceptor of the active site. 156-159 (DSTD) lines the spermidine pocket. Proline 163 lines the S-methyl-5'-thioadenosine pocket.

Belongs to the spermidine/spermine synthase family. In terms of assembly, homodimer or homotetramer.

It localises to the cytoplasm. The catalysed reaction is S-adenosyl 3-(methylsulfanyl)propylamine + putrescine = S-methyl-5'-thioadenosine + spermidine + H(+). It functions in the pathway amine and polyamine biosynthesis; spermidine biosynthesis; spermidine from putrescine: step 1/1. Catalyzes the irreversible transfer of a propylamine group from the amino donor S-adenosylmethioninamine (decarboxy-AdoMet) to putrescine (1,4-diaminobutane) to yield spermidine. This Clostridioides difficile (strain 630) (Peptoclostridium difficile) protein is Polyamine aminopropyltransferase.